A 768-amino-acid chain; its full sequence is Dual specificity calcium/calmodulin-dependent 3',5'-cyclic nucleotide phosphodiesterase 1C (768 aa).

Met-1 carries the N-acetylmethionine modification. The segment at 183–206 is calmodulin-binding; the sequence is EKPRFKSIVHAVQAGIFVERMYRR. The PDEase domain maps to 211–588; it reads VGLSYPPAVI…ERWRAKVPKE (378 aa). His-288 serves as the catalytic Proton donor. Zn(2+) is bound by residues His-292, His-328, Asp-329, and Asp-436. Position 329 (Asp-329) interacts with Mg(2+). 2 disordered regions span residues 513-557 and 584-719; these read LIDE…INNS and KVPK…PPLR. 2 stretches are compositionally biased toward polar residues: residues 516 to 536 and 543 to 557; these read ETSQ…INSS and VKSS…INNS. A compositionally biased stretch (basic and acidic residues) spans 584-614; that stretch reads KVPKEEKAKKEAEEKARLAAEEKQKEMEAKS. The span at 631–641 shows a compositional bias: polar residues; it reads ETKGQVNGTRT. Basic and acidic residues-rich tracts occupy residues 642–659 and 665–692; these read SKGD…KAGE and DLKD…DGTK. A compositionally biased stretch (low complexity) spans 698–712; that stretch reads SPAPSTSSTSRLTLP.

Belongs to the cyclic nucleotide phosphodiesterase family. PDE1 subfamily. In terms of assembly, homodimer. It depends on Zn(2+) as a cofactor. Mg(2+) is required as a cofactor. In terms of tissue distribution, highly expressed in olfactory epithelium and at moderate levels, in cerebellum, as well as weakly in forebrain, testis, heart and lung. In the olfactory epithelium, expressed by sensory neurons, but not epithelial cells.

The protein resides in the lysosome. The enzyme catalyses a nucleoside 3',5'-cyclic phosphate + H2O = a nucleoside 5'-phosphate + H(+). It catalyses the reaction 3',5'-cyclic GMP + H2O = GMP + H(+). The catalysed reaction is 3',5'-cyclic AMP + H2O = AMP + H(+). Its activity is regulated as follows. Type I PDE are activated by the binding of calmodulin in the presence of Ca(2+). In terms of biological role, calmodulin-dependent cyclic nucleotide phosphodiesterase with a dual specificity for the second messengers cAMP and cGMP, which are key regulators of many important physiological processes. Has a high affinity for both cAMP and cGMP. Modulates the amplitude and duration of the cAMP signal in sensory cilia in response to odorant stimulation, hence contributing to the generation of action potentials. Regulates smooth muscle cell proliferation. Regulates the stability of growth factor receptors, including PDGFRB. The chain is Dual specificity calcium/calmodulin-dependent 3',5'-cyclic nucleotide phosphodiesterase 1C from Rattus norvegicus (Rat).